The sequence spans 283 residues: MTVGIVAQRDNDRAMSLASTLCDRLRATSAAVVVDETTAGALGDHDAWEAAVPDSAPVDEMSACNLVVSIGGDGTFLYAARGAGSTPILGVNLGEVGFLNAIAPEEAVETVVAEVEHIQKTGSARTRAKPRLQASGDNWELSPALNEVVVQGERRGHGGGATVDVYVDDSLYTSGHADGVLVATPTGSTAYNLSERGPLVHPDVAGLIITGMADEMGTPPLVVDVDSEIVVELTDADSGVVVSDGRVRKDVVPPERITVSRAGEPVRLAGPPLDFFTALDKLA.

Asp73 (proton acceptor) is an active-site residue. Residues 73–74 (DG), 146–147 (NE), His157, His176, Asp178, 189–194 (TAYNLS), and Ala213 each bind NAD(+).

Belongs to the NAD kinase family. It depends on a divalent metal cation as a cofactor.

It is found in the cytoplasm. It carries out the reaction NAD(+) + ATP = ADP + NADP(+) + H(+). Functionally, involved in the regulation of the intracellular balance of NAD and NADP, and is a key enzyme in the biosynthesis of NADP. Catalyzes specifically the phosphorylation on 2'-hydroxyl of the adenosine moiety of NAD to yield NADP. This chain is NAD kinase, found in Haloarcula marismortui (strain ATCC 43049 / DSM 3752 / JCM 8966 / VKM B-1809) (Halobacterium marismortui).